Reading from the N-terminus, the 152-residue chain is Protein PLANT CADMIUM RESISTANCE 2 (152 aa).

Residues 57 to 79 (TAGALYALIAVVTGCACIYSCFY) form a helical membrane-spanning segment.

It belongs to the cornifelin family. Homooligomer. In terms of tissue distribution, expressed in roots, leaves, shoots, stems, flowers and siliques. In leaves, restricted mainly to the vascular tissue. Expressed in all cells in the root tip, in the vascular tissue and the epidermis in the elongation zone, and only in the epidermal cells in the root hair zone.

Its subcellular location is the cell membrane. Its function is as follows. Zinc transporter acting in both zinc extrusion and long-distance zinc transport. Involved in the loading of zinc into the xyleme and in the detoxification of excess zinc at the epidermal cells. Acts independently from the zinc transporters HMA2 and HMA4. May be also involved in cadmium resistance. The sequence is that of Protein PLANT CADMIUM RESISTANCE 2 (PCR2) from Arabidopsis thaliana (Mouse-ear cress).